A 322-amino-acid chain; its full sequence is tRNA U34 carboxymethyltransferase (322 aa).

Carboxy-S-adenosyl-L-methionine-binding positions include K91, W105, K110, G129, 179-180 (LE), M195, Y199, and R314.

This sequence belongs to the class I-like SAM-binding methyltransferase superfamily. CmoB family. Homotetramer.

It carries out the reaction carboxy-S-adenosyl-L-methionine + 5-hydroxyuridine(34) in tRNA = 5-carboxymethoxyuridine(34) in tRNA + S-adenosyl-L-homocysteine + H(+). Functionally, catalyzes carboxymethyl transfer from carboxy-S-adenosyl-L-methionine (Cx-SAM) to 5-hydroxyuridine (ho5U) to form 5-carboxymethoxyuridine (cmo5U) at position 34 in tRNAs. This is tRNA U34 carboxymethyltransferase from Pseudomonas aeruginosa (strain LESB58).